Here is a 215-residue protein sequence, read N- to C-terminus: Large ribosomal subunit protein uL1 (215 aa).

This sequence belongs to the universal ribosomal protein uL1 family. In terms of assembly, part of the 50S ribosomal subunit.

Binds directly to 23S rRNA. Probably involved in E site tRNA release. Its function is as follows. Protein L1 is also a translational repressor protein, it controls the translation of its operon by binding to its mRNA. This is Large ribosomal subunit protein uL1 from Archaeoglobus fulgidus (strain ATCC 49558 / DSM 4304 / JCM 9628 / NBRC 100126 / VC-16).